The chain runs to 142 residues: Dynein light chain Tctex-type protein 2B (142 aa).

This sequence belongs to the dynein light chain Tctex-type family. Light chain of the cytoplasmic dynein complex 2, a multisubunit complex composed at least of eleven different proteins. The cytoplasmic dynein 2 complex consists of two catalytic heavy chains (HCs) and a number of non-catalytic subunits presented by intermediate chains (ICs), light intermediate chains (LICs) and light chains (LCs). Among them, a heavy chain (DYNC2H1), two intermediate chains (DYNC2I2 and DYNC2I1), a light intermediate chain (DYNC2LI1), and a light chain (DYNLT2B) are unique to the dynein-2 complex, but a subset of the light chains are also shared by dynein-1 and dynein-2 complexes. Interacts with DYNC2I1. The dimer DYNLT2B-DYNLT1/DYNLT3 interacts with DYNC2I1; this interaction is crucial for retrograde trafficking of ciliary proteins.

It is found in the dynein axonemal particle. Functionally, acts as one of several non-catalytic accessory components of the cytoplasmic dynein 2 complex (dynein-2 complex), a motor protein complex that drives the movement of cargos along microtubules within cilia and flagella in concert with the intraflagellar transport (IFT) system. Required for proper retrograde ciliary transport. The sequence is that of Dynein light chain Tctex-type protein 2B from Homo sapiens (Human).